The chain runs to 138 residues: Basic phospholipase A2 homolog promutoxin (138 aa).

An N-terminal signal peptide occupies residues 1–16; it reads MRTLWIMAVLLLGVEG. Intrachain disulfides connect Cys42/Cys132, Cys44/Cys60, Cys59/Cys112, Cys65/Cys138, Cys66/Cys105, Cys73/Cys98, and Cys91/Cys103. The interval 122–133 is important for membrane-damaging activities in eukaryotes and bacteria; heparin-binding; sequence KKHRVTMKFLCK.

It belongs to the phospholipase A2 family. Group II subfamily. R49 sub-subfamily. Homodimer; non-covalently linked. Expressed by the venom gland.

It localises to the secreted. Functionally, snake venom phospholipase A2 homolog that lacks enzymatic activity. Exhibits potent myotoxicity causing myonecrosis and edema in the gastrocnemius muscle of mice. Is also able to stimulate the release of IL12 (IL12A-IL12B), TNF-alpha (TNF), IL6 and IL1-beta (IL1B) from human monocytes, and induce IL2, TNFalpha and IL6 release from T-cells. A model of myotoxic mechanism has been proposed: an apo Lys49-PLA2 is activated by the entrance of a hydrophobic molecule (e.g. fatty acid) at the hydrophobic channel of the protein leading to a reorientation of a monomer. This reorientation causes a transition between 'inactive' to 'active' states, causing alignment of C-terminal and membrane-docking sites (MDoS) side-by-side and putting the membrane-disruption sites (MDiS) in the same plane, exposed to solvent and in a symmetric position for both monomers. The MDoS region stabilizes the toxin on membrane by the interaction of charged residues with phospholipid head groups. Subsequently, the MDiS region destabilizes the membrane with penetration of hydrophobic residues. This insertion causes a disorganization of the membrane, allowing an uncontrolled influx of ions (i.e. calcium and sodium), and eventually triggering irreversible intracellular alterations and cell death. In Protobothrops mucrosquamatus (Taiwan habu), this protein is Basic phospholipase A2 homolog promutoxin.